The following is a 244-amino-acid chain: THO complex subunit 4A (244 aa).

The interval 1-82 (MSTGLDMSLD…EDHRSGRSSA (82 aa)) is disordered. The residue at position 2 (S2) is an N-acetylserine. Gly residues predominate over residues 21–35 (GGAGPARGTGSGSGP). Residues 67 to 77 (MFSDRSEDHRS) are compositionally biased toward basic and acidic residues. An RRM domain is found at 88–165 (TKLYISNLDY…KPMKIEIVGT (78 aa)). The segment at 169 to 244 (TAAAPSGRPA…KYHSGDMETN (76 aa)) is disordered. Residues 187–211 (WRGGQGRGGQQRGGGRGGGGRGGGG) show a composition bias toward gly residues. Basic and acidic residues predominate over residues 220–244 (PAEKISAEDLDADLDKYHSGDMETN).

This sequence belongs to the ALYREF family.

Its subcellular location is the nucleus. The protein resides in the nucleoplasm. The protein localises to the nucleolus. Export adapter involved in nuclear export of spliced and unspliced mRNA. This is THO complex subunit 4A (ALY1) from Arabidopsis thaliana (Mouse-ear cress).